Consider the following 243-residue polypeptide: PHO85 cyclin-like protein psl1 (243 aa).

Positions 211–224 (ESPISHTPQQNQQD) are enriched in polar residues. A disordered region spans residues 211–231 (ESPISHTPQQNQQDEQPRRPI).

It belongs to the cyclin family. PHO80 subfamily. In terms of assembly, forms a cyclin-CDK complex with pef1.

It localises to the cytoplasm. The protein localises to the nucleus. Functionally, cyclin partner of the cyclin-dependent kinase (CDK) pef1 (PHO85 homolog). The protein is PHO85 cyclin-like protein psl1 (psl1) of Schizosaccharomyces pombe (strain 972 / ATCC 24843) (Fission yeast).